Reading from the N-terminus, the 184-residue chain is ATP synthase subunit b, chloroplastic (184 aa).

The helical transmembrane segment at 27 to 49 (FATNPINLSVVLGVLIFFGKGVL) threads the bilayer.

Belongs to the ATPase B chain family. As to quaternary structure, F-type ATPases have 2 components, F(1) - the catalytic core - and F(0) - the membrane proton channel. F(1) has five subunits: alpha(3), beta(3), gamma(1), delta(1), epsilon(1). F(0) has four main subunits: a(1), b(1), b'(1) and c(10-14). The alpha and beta chains form an alternating ring which encloses part of the gamma chain. F(1) is attached to F(0) by a central stalk formed by the gamma and epsilon chains, while a peripheral stalk is formed by the delta, b and b' chains.

It localises to the plastid. The protein localises to the chloroplast thylakoid membrane. F(1)F(0) ATP synthase produces ATP from ADP in the presence of a proton or sodium gradient. F-type ATPases consist of two structural domains, F(1) containing the extramembraneous catalytic core and F(0) containing the membrane proton channel, linked together by a central stalk and a peripheral stalk. During catalysis, ATP synthesis in the catalytic domain of F(1) is coupled via a rotary mechanism of the central stalk subunits to proton translocation. In terms of biological role, component of the F(0) channel, it forms part of the peripheral stalk, linking F(1) to F(0). This chain is ATP synthase subunit b, chloroplastic, found in Amborella trichopoda.